The following is a 444-amino-acid chain: MKLLLILLGALLAVLTIKRTSAVQGSNHLICYYDGTSYTREGLAKLTLNDLEPALQFCTHLVYGHAAINPSSNKLVSNNEKLDLDVGTGLYRTITGMKKKYPHLKVLLSVGGDKDEVDADNNKYLTLLESSNARIPFINSAHSMVKTYGFDGLELGWQFPKNKPKKVHGSIGKLWKGFKKIFTGDFIVDEKAEEHKEEFTALVRELKNALRPDGYILGLAVLPNVNSSLFYDVPAIVNNLDYVNLMAYDFQTPQRNPEMADFPAPIYELNERNPESNVNYQVQYWLQNHCPASKINVGIPSYGRAWKMTTDSGLTGLPPVSDADGPAAGGLQTQTEGLLSWPEVCAKLPNPANQHLKGADSPLRKVGDPTKRFGNYAYRSTDDKGENGIWVSYEDPDTAANKAAYVKTKGLGGVALVDLSFDDFRGACTGDKYPILRAIKFKFQ.

An N-terminal signal peptide occupies residues 1-22 (MKLLLILLGALLAVLTIKRTSA). The region spanning 27 to 444 (NHLICYYDGT…ILRAIKFKFQ (418 aa)) is the GH18 domain. A disulfide bond links cysteine 31 and cysteine 58. An N-linked (GlcNAc...) asparagine glycan is attached at asparagine 226. A disulfide bridge links cysteine 345 with cysteine 428.

Belongs to the glycosyl hydrolase 18 family. IDGF subfamily. In terms of processing, glycosylated.

Its subcellular location is the secreted. In terms of biological role, cooperates with insulin-like peptides to stimulate the proliferation, polarization and motility of imaginal disk cells. May act by stabilizing the binding of insulin-like peptides to its receptor through a simultaneous interaction with both molecules to form a multiprotein signaling complex. This chain is Chitinase-like protein Idgf4 (Idgf4), found in Glossina morsitans morsitans (Savannah tsetse fly).